We begin with the raw amino-acid sequence, 417 residues long: Spermidine/putrescine import ATP-binding protein PotA (417 aa).

Positions 5 to 308 (IILKDLTKVF…PANRFVAQFV (304 aa)) constitute an ABC transporter domain. Residue 37–44 (GPSGCGKT) participates in ATP binding. The tract at residues 105–177 (DFNSKIKANL…TALKCKKINK (73 aa)) is insert.

The protein belongs to the ABC transporter superfamily. Spermidine/putrescine importer (TC 3.A.1.11.1) family. As to quaternary structure, the complex is composed of two ATP-binding proteins (PotA), two transmembrane proteins (PotB and PotC) and a solute-binding protein (PotD).

It localises to the cell membrane. The enzyme catalyses ATP + H2O + polyamine-[polyamine-binding protein]Side 1 = ADP + phosphate + polyamineSide 2 + [polyamine-binding protein]Side 1.. In terms of biological role, part of the ABC transporter complex PotABCD involved in spermidine/putrescine import. Responsible for energy coupling to the transport system. In Onion yellows phytoplasma (strain OY-M), this protein is Spermidine/putrescine import ATP-binding protein PotA.